Here is a 237-residue protein sequence, read N- to C-terminus: Casparian strip membrane protein 2 (237 aa).

The tract at residues 1–48 (MSGSDTSGSVHVDEHGHGHGKASSSYDGAGAPAPAPAPFQGHRKAGSG) is disordered. Over 1–69 (MSGSDTSGSV…GSGGDGLRRC (69 aa)) the chain is Cytoplasmic. Residues 70–90 (LGLIDFVLRVAAFGPTLAAAI) traverse the membrane as a helical segment. Over 91 to 117 (SIGTSDERLSVFTNYFQFRARFDDFPA) the chain is Extracellular. The chain crosses the membrane as a helical span at residues 118-138 (FEFFIVANAIAAGYMVLSLPF). Over 139 to 152 (SAATIMSSKATGVK) the chain is Cytoplasmic. The chain crosses the membrane as a helical span at residues 153-173 (LLLLICDTIMVGLLTAAASAA). The Extracellular portion of the chain corresponds to 174-205 (AAMVYVAHEGNLRANWVPICLQFHGFCQRTSG). Residues 206–226 (AVIASFLAVFVLMVLIVMAAF) form a helical membrane-spanning segment. At 227–237 (TMPRRTHHTAS) the chain is on the cytoplasmic side.

It belongs to the Casparian strip membrane proteins (CASP) family. In terms of assembly, homodimer and heterodimers.

It is found in the cell membrane. In terms of biological role, regulates membrane-cell wall junctions and localized cell wall deposition. Required for establishment of the Casparian strip membrane domain (CSD) and the subsequent formation of Casparian strips, a cell wall modification of the root endodermis that determines an apoplastic barrier between the intraorganismal apoplasm and the extraorganismal apoplasm and prevents lateral diffusion. In Oryza sativa subsp. japonica (Rice), this protein is Casparian strip membrane protein 2.